A 273-amino-acid polypeptide reads, in one-letter code: 4-hydroxy-tetrahydrodipicolinate reductase 1 (273 aa).

NAD(+)-binding positions include 13–18 and glutamate 39; that span reads GAAGRM. Arginine 40 provides a ligand contact to NADP(+). NAD(+) contacts are provided by residues 103–105 and 127–130; these read GTT and SGNM. The Proton donor/acceptor role is filled by histidine 161. (S)-2,3,4,5-tetrahydrodipicolinate is bound at residue histidine 162. Residue lysine 165 is the Proton donor of the active site. 171 to 172 is a (S)-2,3,4,5-tetrahydrodipicolinate binding site; sequence GT.

The protein belongs to the DapB family.

The protein resides in the cytoplasm. The catalysed reaction is (S)-2,3,4,5-tetrahydrodipicolinate + NAD(+) + H2O = (2S,4S)-4-hydroxy-2,3,4,5-tetrahydrodipicolinate + NADH + H(+). It catalyses the reaction (S)-2,3,4,5-tetrahydrodipicolinate + NADP(+) + H2O = (2S,4S)-4-hydroxy-2,3,4,5-tetrahydrodipicolinate + NADPH + H(+). The protein operates within amino-acid biosynthesis; L-lysine biosynthesis via DAP pathway; (S)-tetrahydrodipicolinate from L-aspartate: step 4/4. Functionally, catalyzes the conversion of 4-hydroxy-tetrahydrodipicolinate (HTPA) to tetrahydrodipicolinate. In Mesorhizobium japonicum (strain LMG 29417 / CECT 9101 / MAFF 303099) (Mesorhizobium loti (strain MAFF 303099)), this protein is 4-hydroxy-tetrahydrodipicolinate reductase 1.